The chain runs to 128 residues: Small ribosomal subunit protein uS11 (128 aa).

Belongs to the universal ribosomal protein uS11 family. As to quaternary structure, part of the 30S ribosomal subunit. Interacts with proteins S7 and S18. Binds to IF-3.

Its function is as follows. Located on the platform of the 30S subunit, it bridges several disparate RNA helices of the 16S rRNA. Forms part of the Shine-Dalgarno cleft in the 70S ribosome. The protein is Small ribosomal subunit protein uS11 of Desulfatibacillum aliphaticivorans.